The primary structure comprises 371 residues: Probable L-aspartate decarboxylase (371 aa).

Lys-232 carries the post-translational modification N6-(pyridoxal phosphate)lysine.

It belongs to the group II decarboxylase family. MfnA subfamily. Pyridoxal 5'-phosphate is required as a cofactor.

It catalyses the reaction L-aspartate + H(+) = beta-alanine + CO2. It functions in the pathway cofactor biosynthesis; coenzyme A biosynthesis. Functionally, catalyzes the decarboxylation of L-aspartate to produce beta-alanine. This is Probable L-aspartate decarboxylase from Pyrococcus furiosus (strain ATCC 43587 / DSM 3638 / JCM 8422 / Vc1).